Here is a 460-residue protein sequence, read N- to C-terminus: tRNA modification GTPase MnmE (460 aa).

Positions 29, 91, and 132 each coordinate (6S)-5-formyl-5,6,7,8-tetrahydrofolate. Positions 227-383 constitute a TrmE-type G domain; the sequence is GISIALIGKT…LIDTIIKKCG (157 aa). Asparagine 237 is a K(+) binding site. GTP is bound by residues 237-242, 256-262, and 281-284; these read NVGKSS, TNIPGTT, and DTAG. Serine 241 contributes to the Mg(2+) binding site. The K(+) site is built by threonine 256, isoleucine 258, and threonine 261. Threonine 262 serves as a coordination point for Mg(2+). Lysine 460 lines the (6S)-5-formyl-5,6,7,8-tetrahydrofolate pocket.

It belongs to the TRAFAC class TrmE-Era-EngA-EngB-Septin-like GTPase superfamily. TrmE GTPase family. In terms of assembly, homodimer. Heterotetramer of two MnmE and two MnmG subunits. K(+) serves as cofactor.

The protein resides in the cytoplasm. Functionally, exhibits a very high intrinsic GTPase hydrolysis rate. Involved in the addition of a carboxymethylaminomethyl (cmnm) group at the wobble position (U34) of certain tRNAs, forming tRNA-cmnm(5)s(2)U34. The sequence is that of tRNA modification GTPase MnmE from Prochlorococcus marinus (strain AS9601).